Here is a 256-residue protein sequence, read N- to C-terminus: Pyridoxine 5'-phosphate synthase (256 aa).

Asn-12 is a binding site for 3-amino-2-oxopropyl phosphate. 14–15 is a binding site for 1-deoxy-D-xylulose 5-phosphate; that stretch reads DH. Arg-23 contacts 3-amino-2-oxopropyl phosphate. His-48 acts as the Proton acceptor in catalysis. 2 residues coordinate 1-deoxy-D-xylulose 5-phosphate: Arg-50 and His-55. Residue Glu-75 is the Proton acceptor of the active site. Position 105 (Thr-105) interacts with 1-deoxy-D-xylulose 5-phosphate. Residue His-199 is the Proton donor of the active site. Residues Gly-200 and 221–222 each bind 3-amino-2-oxopropyl phosphate; that span reads GY.

The protein belongs to the PNP synthase family. In terms of assembly, homooctamer; tetramer of dimers.

The protein resides in the cytoplasm. It carries out the reaction 3-amino-2-oxopropyl phosphate + 1-deoxy-D-xylulose 5-phosphate = pyridoxine 5'-phosphate + phosphate + 2 H2O + H(+). It functions in the pathway cofactor biosynthesis; pyridoxine 5'-phosphate biosynthesis; pyridoxine 5'-phosphate from D-erythrose 4-phosphate: step 5/5. Its function is as follows. Catalyzes the complicated ring closure reaction between the two acyclic compounds 1-deoxy-D-xylulose-5-phosphate (DXP) and 3-amino-2-oxopropyl phosphate (1-amino-acetone-3-phosphate or AAP) to form pyridoxine 5'-phosphate (PNP) and inorganic phosphate. This is Pyridoxine 5'-phosphate synthase from Bradyrhizobium sp. (strain ORS 278).